The sequence spans 325 residues: Aspartate carbamoyltransferase catalytic subunit (325 aa).

The carbamoyl phosphate site is built by Arg-64 and Thr-65. Residue Lys-92 participates in L-aspartate binding. Residues Arg-114, His-142, and Gln-145 each contribute to the carbamoyl phosphate site. L-aspartate contacts are provided by Arg-176 and Arg-230. Carbamoyl phosphate-binding residues include Gly-271 and Pro-272.

The protein belongs to the aspartate/ornithine carbamoyltransferase superfamily. ATCase family. As to quaternary structure, heterododecamer (2C3:3R2) of six catalytic PyrB chains organized as two trimers (C3), and six regulatory PyrI chains organized as three dimers (R2).

The enzyme catalyses carbamoyl phosphate + L-aspartate = N-carbamoyl-L-aspartate + phosphate + H(+). The protein operates within pyrimidine metabolism; UMP biosynthesis via de novo pathway; (S)-dihydroorotate from bicarbonate: step 2/3. Catalyzes the condensation of carbamoyl phosphate and aspartate to form carbamoyl aspartate and inorganic phosphate, the committed step in the de novo pyrimidine nucleotide biosynthesis pathway. This is Aspartate carbamoyltransferase catalytic subunit from Nitratidesulfovibrio vulgaris (strain DSM 19637 / Miyazaki F) (Desulfovibrio vulgaris).